A 115-amino-acid polypeptide reads, in one-letter code: Large ribosomal subunit protein bL20 (115 aa).

This sequence belongs to the bacterial ribosomal protein bL20 family.

Functionally, binds directly to 23S ribosomal RNA and is necessary for the in vitro assembly process of the 50S ribosomal subunit. It is not involved in the protein synthesizing functions of that subunit. The protein is Large ribosomal subunit protein bL20 of Synechococcus sp. (strain RCC307).